Here is a 339-residue protein sequence, read N- to C-terminus: Phenylalanine--tRNA ligase alpha subunit (339 aa).

Glu254 is a Mg(2+) binding site.

This sequence belongs to the class-II aminoacyl-tRNA synthetase family. Phe-tRNA synthetase alpha subunit type 1 subfamily. Tetramer of two alpha and two beta subunits. The cofactor is Mg(2+).

The protein localises to the cytoplasm. It catalyses the reaction tRNA(Phe) + L-phenylalanine + ATP = L-phenylalanyl-tRNA(Phe) + AMP + diphosphate + H(+). This chain is Phenylalanine--tRNA ligase alpha subunit, found in Clostridium botulinum (strain Langeland / NCTC 10281 / Type F).